The primary structure comprises 252 residues: 5'-nucleotidase SurE (252 aa).

The a divalent metal cation site is built by D8, D9, S39, and N91.

This sequence belongs to the SurE nucleotidase family. Requires a divalent metal cation as cofactor.

The protein resides in the cytoplasm. The enzyme catalyses a ribonucleoside 5'-phosphate + H2O = a ribonucleoside + phosphate. Nucleotidase that shows phosphatase activity on nucleoside 5'-monophosphates. This chain is 5'-nucleotidase SurE, found in Paraburkholderia xenovorans (strain LB400).